We begin with the raw amino-acid sequence, 268 residues long: Tryptophan synthase alpha chain (268 aa).

Residues Glu49 and Asp60 each act as proton acceptor in the active site.

This sequence belongs to the TrpA family. As to quaternary structure, tetramer of two alpha and two beta chains.

It catalyses the reaction (1S,2R)-1-C-(indol-3-yl)glycerol 3-phosphate + L-serine = D-glyceraldehyde 3-phosphate + L-tryptophan + H2O. It participates in amino-acid biosynthesis; L-tryptophan biosynthesis; L-tryptophan from chorismate: step 5/5. Its function is as follows. The alpha subunit is responsible for the aldol cleavage of indoleglycerol phosphate to indole and glyceraldehyde 3-phosphate. The polypeptide is Tryptophan synthase alpha chain (Vibrio metschnikovii).